The chain runs to 417 residues: Maltodextrin-binding protein MdxE (417 aa).

An N-terminal signal peptide occupies residues 1–22; sequence MVLLKKGFAILAASFLAIGLAA. Cys-23 is lipidated: N-palmitoyl cysteine. A lipid anchor (S-diacylglycerol cysteine) is attached at Cys-23.

It belongs to the bacterial solute-binding protein 1 family. In terms of assembly, the complex is composed of two ATP-binding proteins (MsmX), two transmembrane proteins (MdxF and MdxG) and a solute-binding protein (MdxE).

The protein resides in the cell membrane. Its activity is regulated as follows. Inhibited by glucose and lactose. In terms of biological role, part of the ABC transporter complex involved in maltodextrin import. Binds maltodextrin. Can also bind maltose with low affinity, but is not involved in its uptake. This chain is Maltodextrin-binding protein MdxE (mdxE), found in Bacillus subtilis (strain 168).